Reading from the N-terminus, the 314-residue chain is UDP-N-acetylenolpyruvoylglucosamine reductase (314 aa).

One can recognise an FAD-binding PCMH-type domain in the interval 31–208 (RIGGPADYYA…LSARFRLTPK (178 aa)). Arg-187 is a catalytic residue. Ser-237 (proton donor) is an active-site residue. The active site involves Glu-307.

Belongs to the MurB family. The cofactor is FAD.

The protein localises to the cytoplasm. It carries out the reaction UDP-N-acetyl-alpha-D-muramate + NADP(+) = UDP-N-acetyl-3-O-(1-carboxyvinyl)-alpha-D-glucosamine + NADPH + H(+). It participates in cell wall biogenesis; peptidoglycan biosynthesis. Functionally, cell wall formation. This is UDP-N-acetylenolpyruvoylglucosamine reductase from Agathobacter rectalis (strain ATCC 33656 / DSM 3377 / JCM 17463 / KCTC 5835 / VPI 0990) (Eubacterium rectale).